A 261-amino-acid chain; its full sequence is Thiazole synthase (261 aa).

The active-site Schiff-base intermediate with DXP is Lys-101. Residues Gly-162, 188–189, and 210–211 each bind 1-deoxy-D-xylulose 5-phosphate; these read AG and NT.

It belongs to the ThiG family. As to quaternary structure, homotetramer. Forms heterodimers with either ThiH or ThiS.

Its subcellular location is the cytoplasm. It catalyses the reaction [ThiS sulfur-carrier protein]-C-terminal-Gly-aminoethanethioate + 2-iminoacetate + 1-deoxy-D-xylulose 5-phosphate = [ThiS sulfur-carrier protein]-C-terminal Gly-Gly + 2-[(2R,5Z)-2-carboxy-4-methylthiazol-5(2H)-ylidene]ethyl phosphate + 2 H2O + H(+). It participates in cofactor biosynthesis; thiamine diphosphate biosynthesis. In terms of biological role, catalyzes the rearrangement of 1-deoxy-D-xylulose 5-phosphate (DXP) to produce the thiazole phosphate moiety of thiamine. Sulfur is provided by the thiocarboxylate moiety of the carrier protein ThiS. In vitro, sulfur can be provided by H(2)S. This is Thiazole synthase from Aromatoleum aromaticum (strain DSM 19018 / LMG 30748 / EbN1) (Azoarcus sp. (strain EbN1)).